Here is a 181-residue protein sequence, read N- to C-terminus: Acireductone dioxygenase (181 aa).

4 residues coordinate Fe(2+): histidine 97, histidine 99, glutamate 103, and histidine 141. Histidine 97, histidine 99, glutamate 103, and histidine 141 together coordinate Ni(2+).

Belongs to the acireductone dioxygenase (ARD) family. Monomer. Requires Fe(2+) as cofactor. It depends on Ni(2+) as a cofactor.

It catalyses the reaction 1,2-dihydroxy-5-(methylsulfanyl)pent-1-en-3-one + O2 = 3-(methylsulfanyl)propanoate + CO + formate + 2 H(+). The enzyme catalyses 1,2-dihydroxy-5-(methylsulfanyl)pent-1-en-3-one + O2 = 4-methylsulfanyl-2-oxobutanoate + formate + 2 H(+). It functions in the pathway amino-acid biosynthesis; L-methionine biosynthesis via salvage pathway; L-methionine from S-methyl-5-thio-alpha-D-ribose 1-phosphate: step 5/6. Functionally, catalyzes 2 different reactions between oxygen and the acireductone 1,2-dihydroxy-3-keto-5-methylthiopentene (DHK-MTPene) depending upon the metal bound in the active site. Fe-containing acireductone dioxygenase (Fe-ARD) produces formate and 2-keto-4-methylthiobutyrate (KMTB), the alpha-ketoacid precursor of methionine in the methionine recycle pathway. Ni-containing acireductone dioxygenase (Ni-ARD) produces methylthiopropionate, carbon monoxide and formate, and does not lie on the methionine recycle pathway. The protein is Acireductone dioxygenase of Pseudomonas paraeruginosa (strain DSM 24068 / PA7) (Pseudomonas aeruginosa (strain PA7)).